The following is a 156-amino-acid chain: Oxidized purine nucleoside triphosphate hydrolase (156 aa).

Positions 3-132 constitute a Nudix hydrolase domain; that stretch reads TSRLYTLVLV…WFPLLLQKKK (130 aa). Residue T8 participates in 2-oxo-dATP binding. 8-oxo-dGTP is bound at residue K23. Residues N33 and 35-38 each bind 2-oxo-dATP; that span reads FGGK. G36, E52, E55, E56, and E100 together coordinate Mg(2+). The Nudix box signature appears at 37 to 58; it reads GKVQEGETIEDGAKRELREESG. Residue 117-120 participates in 2-oxo-dATP binding; it reads WPDD.

It belongs to the Nudix hydrolase family. As to quaternary structure, monomer. It depends on Mg(2+) as a cofactor.

The protein resides in the cytoplasm. The protein localises to the nucleus. Its subcellular location is the nucleus membrane. It is found in the cytoplasmic vesicle. It localises to the secretory vesicle. The protein resides in the acrosome. The catalysed reaction is 2-oxo-dATP + H2O = 2-oxo-dAMP + diphosphate + H(+). The enzyme catalyses 2-oxo-ATP + H2O = 2-oxo-AMP + diphosphate + H(+). It catalyses the reaction 8-oxo-dGTP + H2O = 8-oxo-dGMP + diphosphate + H(+). It carries out the reaction 8-oxo-dATP + H2O = 8-oxo-dAMP + diphosphate + H(+). The catalysed reaction is O(6)-methyl-dGTP + H2O = O(6)-methyl-dGMP + diphosphate + H(+). The enzyme catalyses N(6)-methyl-dATP + H2O = N(6)-methyl-dAMP + diphosphate + H(+). It catalyses the reaction N(6)-methyl-ATP + H2O = N(6)-methyl-AMP + diphosphate + H(+). In terms of biological role, oxidized purine nucleoside triphosphate hydrolase which is a prominent sanitizer of the oxidized nucleotide pool. Catalyzes the hydrolysis of 2-oxo-dATP (2-hydroxy-dATP) into 2-oxo-dAMP. Also has a significant hydrolase activity toward 2-oxo-ATP, 8-oxo-dGTP and 8-oxo-dATP. Through the hydrolysis of oxidized purine nucleoside triphosphates, prevents their incorporation into DNA and the subsequent transversions A:T to C:G and G:C to T:A. Also catalyzes the hydrolysis of methylated purine nucleoside triphosphate preventing their integration into DNA. Through this antimutagenic activity protects cells from oxidative stress. The sequence is that of Oxidized purine nucleoside triphosphate hydrolase (NUDT1) from Canis lupus familiaris (Dog).